The chain runs to 676 residues: MTHYHNPLNGRKVLNQQFVLQAPFLPCGDQPEAIRQLSRGILDGIPSQVLLGTTGSGKTFTMANVIANVNVPTLVLAHNKTLAAQLYQEFKAFFPENAVEYFISYYDYYQPEAYIARSDTYIEKSLLINDEIDKLRLSATRSILERRDTLIVSSISCIYGIGSPDNYSSMALILEVGKEYPRSQLSAQLVRMHYQASASPQRSAFRERGSVIDIFLAYESDLAVRLEFVNDTLVSIEYTDPLTMIPSHTVPSVTLYPGSHYVTPEAVREQAIRTIREELEQRLLFFEGRPVEQERLFQRTTHDIEMIKEIGFCKGIENYSRHFTGAAPGEPPTCLLDYFPEDFLLIIDESHQTLPQLRAMYRGDQSRKQSLVEYGFRLPSAFDNRPLTYEEARRYFRRVVYVSATPGELEVQESRGHIIEQIIRPTGIPDPLPEIRPATGQIDDLLEEIRQRLRKDQEKILVVSVTKKLAEDIAAFLAELGIAAAYLHSGIETAERTQILTDLRLGTIDVLIGVNLLREGIDLPEVSLVAILDADKEGFLRSSASLIQFCGRAARNVHGKVIFYADRITPSMDHMLKETERRRQIQLDYNKKHNITPKPIIKPILANPITKEGAQEDSRPETQSTEDLESSIKQYEEAMYKAAQDFQFDEAAKYRDLMNAAKRQLLFKQGEDGNSK.

A Helicase ATP-binding domain is found at 39–424 (RGILDGIPSQ…RGHIIEQIIR (386 aa)). An ATP-binding site is contributed by 52–59 (GTTGSGKT). Residues 105 to 128 (YYDYYQPEAYIARSDTYIEKSLLI) carry the Beta-hairpin motif. The region spanning 441–604 (QIDDLLEEIR…ITPKPIIKPI (164 aa)) is the Helicase C-terminal domain. Residues 611–631 (KEGAQEDSRPETQSTEDLESS) are disordered. In terms of domain architecture, UVR spans 629–664 (ESSIKQYEEAMYKAAQDFQFDEAAKYRDLMNAAKRQ).

This sequence belongs to the UvrB family. Forms a heterotetramer with UvrA during the search for lesions. Interacts with UvrC in an incision complex.

It is found in the cytoplasm. Functionally, the UvrABC repair system catalyzes the recognition and processing of DNA lesions. A damage recognition complex composed of 2 UvrA and 2 UvrB subunits scans DNA for abnormalities. Upon binding of the UvrA(2)B(2) complex to a putative damaged site, the DNA wraps around one UvrB monomer. DNA wrap is dependent on ATP binding by UvrB and probably causes local melting of the DNA helix, facilitating insertion of UvrB beta-hairpin between the DNA strands. Then UvrB probes one DNA strand for the presence of a lesion. If a lesion is found the UvrA subunits dissociate and the UvrB-DNA preincision complex is formed. This complex is subsequently bound by UvrC and the second UvrB is released. If no lesion is found, the DNA wraps around the other UvrB subunit that will check the other stand for damage. This chain is UvrABC system protein B, found in Chlamydia muridarum (strain MoPn / Nigg).